The sequence spans 573 residues: Proton-coupled zinc antiporter SLC30A9, mitochondrial (573 aa).

Residues 66–108 (NCSTSGSGKDGSPTRPEEPKTTEKAQAAQPAAKGAGSKPQGLT) form a disordered region. Low complexity predominate over residues 90-104 (AQAAQPAAKGAGSKP). The next 5 membrane-spanning stretches (helical) occupy residues 244–264 (VVMVAICINGLNFFFKLLAWV), 319–339 (GVGIFMMGAGLSWYHGIMGLL), 347–367 (LLWAYCILAGSLVSEGATLLV), 397–417 (VVLLEDAAAVLGVVLAAGCMG), and 429–449 (SLGSLGVGTLLGTVSAFLIYT). Positions 467–471 (LTEFL) match the LXXLL motif motif.

It belongs to the cation diffusion facilitator (CDF) transporter (TC 2.A.4) family. SLC30A subfamily.

It is found in the mitochondrion membrane. Its subcellular location is the nucleus. The protein resides in the endoplasmic reticulum. It carries out the reaction Zn(2+)(in) + 2 H(+)(out) = Zn(2+)(out) + 2 H(+)(in). Mitochondrial proton-coupled zinc ion antiporter mediating the export of zinc from the mitochondria and involved in zinc homeostasis, zinc mobilization as well as mitochondrial morphology and health. In nucleus, may function as a secondary coactivator for nuclear receptors. The chain is Proton-coupled zinc antiporter SLC30A9, mitochondrial (slc30a9) from Danio rerio (Zebrafish).